A 529-amino-acid polypeptide reads, in one-letter code: Endoglucanase 21 (529 aa).

The signal sequence occupies residues 1–24 (MVAAMTMCAAVAVLLVLTSTMAAA). D89 serves as the catalytic Nucleophile. N342 carries N-linked (GlcNAc...) asparagine glycosylation. Residues H429, D481, and E490 contribute to the active site.

This sequence belongs to the glycosyl hydrolase 9 (cellulase E) family. As to expression, expressed in roots and flowers.

The protein localises to the secreted. The enzyme catalyses Endohydrolysis of (1-&gt;4)-beta-D-glucosidic linkages in cellulose, lichenin and cereal beta-D-glucans.. This Oryza sativa subsp. japonica (Rice) protein is Endoglucanase 21 (GLU9).